The primary structure comprises 224 residues: MPGGLLLGDEAPNFEANTTVGRIRFHDFLGDSWGILFSHPRDFTPVCTTELGRAAKLAPEFAKRNVKLIALSIDSVEDHLAWSKDTNAYNCEEPTEKLPFPIIDDKNRDLAILLGMLDPAEKDEKGMPVTARVVFVFGPDKKLKLSILYPATTGRNFDEILRVVISLQLTAEKRVATPVDWKDGDSVMVLPTIPEEEAKKLFPKGVFTKELPSGKKYLRYTPQP.

Residues 5–169 (LLLGDEAPNF…ILRVVISLQL (165 aa)) form the Thioredoxin domain. The interval 31 to 40 (DSWGILFSHP) is required and sufficient for targeting to lysosomes and lamellar bodies. Phosphothreonine is present on Thr44. Catalysis depends on Cys47, which acts as the Cysteine sulfenic acid (-SOH) intermediate; for peroxidase activity. Lys63 bears the N6-acetyllysine mark. Phosphotyrosine is present on Tyr89. The active-site For phospholipase activity is the Asp140. The residue at position 177 (Thr177) is a Phosphothreonine; by MAPK. N6-acetyllysine; alternate is present on Lys209. Position 209 is an N6-succinyllysine; alternate (Lys209).

Belongs to the peroxiredoxin family. Prx6 subfamily. As to quaternary structure, homodimer. Interacts with GSTP1; mediates PRDX6 glutathionylation and regeneration. Interacts with APEX1. Interacts with STH. May interact with FAM168B. May interact with HTR2A. Post-translationally, irreversibly inactivated by overoxidation of Cys-47 to sulfinic acid (Cys-SO(2)H) and sulfonic acid (Cys-SO(3)H) forms upon oxidative stress. In terms of processing, phosphorylation at Thr-177 by MAP kinases increases the phospholipase activity of the enzyme. The phosphorylated form exhibits a greater lysophosphatidylcholine acyltransferase activity compared to the non-phosphorylated form.

The protein localises to the cytoplasm. Its subcellular location is the lysosome. The enzyme catalyses a hydroperoxide + 2 glutathione = an alcohol + glutathione disulfide + H2O. It carries out the reaction a 1,2-diacyl-sn-glycero-3-phosphocholine + H2O = a 1-acyl-sn-glycero-3-phosphocholine + a fatty acid + H(+). The catalysed reaction is a 1-acyl-sn-glycero-3-phosphocholine + an acyl-CoA = a 1,2-diacyl-sn-glycero-3-phosphocholine + CoA. It catalyses the reaction 1-hexadecanoyl-sn-glycero-3-phosphocholine + hexadecanoyl-CoA = 1,2-dihexadecanoyl-sn-glycero-3-phosphocholine + CoA. The enzyme catalyses 1,2-dihexadecanoyl-sn-glycero-3-phosphocholine + H2O = 1-hexadecanoyl-sn-glycero-3-phosphocholine + hexadecanoate + H(+). In terms of biological role, thiol-specific peroxidase that catalyzes the reduction of hydrogen peroxide and organic hydroperoxides to water and alcohols, respectively. Can reduce H(2)O(2) and short chain organic, fatty acid, and phospholipid hydroperoxides. Also has phospholipase activity, and can therefore either reduce the oxidized sn-2 fatty acyl group of phospholipids (peroxidase activity) or hydrolyze the sn-2 ester bond of phospholipids (phospholipase activity). These activities are dependent on binding to phospholipids at acidic pH and to oxidized phospholipds at cytosolic pH. Plays a role in cell protection against oxidative stress by detoxifying peroxides and in phospholipid homeostasis. Exhibits acyl-CoA-dependent lysophospholipid acyltransferase which mediates the conversion of lysophosphatidylcholine (1-acyl-sn-glycero-3-phosphocholine or LPC) into phosphatidylcholine (1,2-diacyl-sn-glycero-3-phosphocholine or PC). Shows a clear preference for LPC as the lysophospholipid and for palmitoyl CoA as the fatty acyl substrate. In Macaca fascicularis (Crab-eating macaque), this protein is Peroxiredoxin-6 (PRDX6).